The sequence spans 357 residues: Carbamoyl phosphate synthase small chain (357 aa).

A CPSase region spans residues 1–168 (MSKRLLILED…STTTAYPSPN (168 aa)). 3 residues coordinate L-glutamine: serine 46, glycine 220, and glycine 222. Residues 172 to 357 (KVVVVDFGLK…FMDLMDNFKK (186 aa)) form the Glutamine amidotransferase type-1 domain. The active-site Nucleophile is the cysteine 247. L-glutamine contacts are provided by leucine 248, glutamine 251, asparagine 289, glycine 291, and tyrosine 292. Catalysis depends on residues histidine 331 and aspartate 333.

This sequence belongs to the CarA family. In terms of assembly, composed of two chains; the small (or glutamine) chain promotes the hydrolysis of glutamine to ammonia, which is used by the large (or ammonia) chain to synthesize carbamoyl phosphate. Tetramer of heterodimers (alpha,beta)4.

The catalysed reaction is hydrogencarbonate + L-glutamine + 2 ATP + H2O = carbamoyl phosphate + L-glutamate + 2 ADP + phosphate + 2 H(+). It carries out the reaction L-glutamine + H2O = L-glutamate + NH4(+). It participates in amino-acid biosynthesis; L-arginine biosynthesis; carbamoyl phosphate from bicarbonate: step 1/1. Its pathway is pyrimidine metabolism; UMP biosynthesis via de novo pathway; (S)-dihydroorotate from bicarbonate: step 1/3. Functionally, small subunit of the glutamine-dependent carbamoyl phosphate synthetase (CPSase). CPSase catalyzes the formation of carbamoyl phosphate from the ammonia moiety of glutamine, carbonate, and phosphate donated by ATP, constituting the first step of 2 biosynthetic pathways, one leading to arginine and/or urea and the other to pyrimidine nucleotides. The small subunit (glutamine amidotransferase) binds and cleaves glutamine to supply the large subunit with the substrate ammonia. This chain is Carbamoyl phosphate synthase small chain, found in Lactococcus lactis subsp. lactis (strain IL1403) (Streptococcus lactis).